Reading from the N-terminus, the 198-residue chain is Glycerol-3-phosphate acyltransferase (198 aa).

5 helical membrane-spanning segments follow: residues 2–22, 48–70, 75–97, 111–131, and 154–174; these read YAVLTAIIAYLIGCINNAYIL, LGYKAAAPVFALDVLKGVIAVLI, MGNTGAMIAGIAVVCGHNWPVFL, VVMTVSPLLGLIALAIGVTVI, and IFWNSTQIFIFSLILASLAIF.

This sequence belongs to the PlsY family. As to quaternary structure, probably interacts with PlsX.

The protein resides in the cell membrane. The enzyme catalyses an acyl phosphate + sn-glycerol 3-phosphate = a 1-acyl-sn-glycero-3-phosphate + phosphate. The protein operates within lipid metabolism; phospholipid metabolism. Catalyzes the transfer of an acyl group from acyl-phosphate (acyl-PO(4)) to glycerol-3-phosphate (G3P) to form lysophosphatidic acid (LPA). This enzyme utilizes acyl-phosphate as fatty acyl donor, but not acyl-CoA or acyl-ACP. The polypeptide is Glycerol-3-phosphate acyltransferase (Thermoanaerobacter pseudethanolicus (strain ATCC 33223 / 39E) (Clostridium thermohydrosulfuricum)).